Reading from the N-terminus, the 388-residue chain is Proline-rich protein 5 (388 aa).

Interaction with RICTOR regions lie at residues 10 to 95 (MSSP…LTKG) and 188 to 218 (HESR…YGLH). Positions 12–31 (SPSLSDLGKREPAAAADERG) are disordered. The segment covering 18 to 31 (LGKREPAAAADERG) has biased composition (basic and acidic residues). Ser-252 bears the Phosphoserine mark. The tract at residues 254-388 (SYNTPLLNPV…EGSGGRQSVV (135 aa)) is disordered. Polar residues predominate over residues 336 to 346 (TRSSLPRSSPE).

The protein belongs to the PROTOR family. As to quaternary structure, associated component of the mechanistic target of rapamycin complex 2 (mTORC2). Binds directly to MTOR and RICTOR within the TORC2 complex. In terms of tissue distribution, most abundant in kidney and liver. Also highly expressed in brain, spleen, testis and placenta. Overexpressed in several colorectal tumors.

In terms of biological role, associated subunit of mTORC2, which regulates cell growth and survival in response to hormonal signals. mTORC2 is activated by growth factors, but, in contrast to mTORC1, seems to be nutrient-insensitive. mTORC2 seems to function upstream of Rho GTPases to regulate the actin cytoskeleton, probably by activating one or more Rho-type guanine nucleotide exchange factors. PRR5 plays an important role in regulation of PDGFRB expression and in modulation of platelet-derived growth factor signaling. May act as a tumor suppressor in breast cancer. This chain is Proline-rich protein 5 (PRR5), found in Homo sapiens (Human).